Consider the following 245-residue polypeptide: Glucan endo-1,3-beta-glucosidase (245 aa).

The first 23 residues, 1–23, serve as a signal peptide directing secretion; the sequence is MMKTLVVVLSLSLTILSFGGAHA. 8 disulfides stabilise this stretch: C32-C244, C80-C90, C95-C102, C150-C233, C155-C216, C163-C179, C183-C192, and C193-C203.

Belongs to the thaumatin family. In terms of tissue distribution, abundantly expressed in ripening fruit.

It is found in the secreted. The enzyme catalyses Hydrolysis of (1-&gt;3)-beta-D-glucosidic linkages in (1-&gt;3)-beta-D-glucans.. In Prunus avium (Cherry), this protein is Glucan endo-1,3-beta-glucosidase.